Consider the following 91-residue polypeptide: Small ribosomal subunit protein bS20 (91 aa).

Disordered regions lie at residues 1–26 (MALR…RSRK) and 67–91 (HKNA…AQQS).

It belongs to the bacterial ribosomal protein bS20 family.

In terms of biological role, binds directly to 16S ribosomal RNA. This is Small ribosomal subunit protein bS20 from Deinococcus deserti (strain DSM 17065 / CIP 109153 / LMG 22923 / VCD115).